The following is a 400-amino-acid chain: Formate-dependent phosphoribosylglycinamide formyltransferase (400 aa).

N(1)-(5-phospho-beta-D-ribosyl)glycinamide is bound by residues 22–23 and E82; that span reads EL. ATP-binding positions include R115, K157, 162–167, 197–200, and E205; these read SSGKGQ and EGFV. Residues 120-315 enclose the ATP-grasp domain; that stretch reads RLAAETLGLP…EFELHARAIL (196 aa). Residues E274 and E286 each contribute to the Mg(2+) site. Residues D293, K362, and 369–370 contribute to the N(1)-(5-phospho-beta-D-ribosyl)glycinamide site; that span reads RR.

The protein belongs to the PurK/PurT family. In terms of assembly, homodimer.

The catalysed reaction is N(1)-(5-phospho-beta-D-ribosyl)glycinamide + formate + ATP = N(2)-formyl-N(1)-(5-phospho-beta-D-ribosyl)glycinamide + ADP + phosphate + H(+). It participates in purine metabolism; IMP biosynthesis via de novo pathway; N(2)-formyl-N(1)-(5-phospho-D-ribosyl)glycinamide from N(1)-(5-phospho-D-ribosyl)glycinamide (formate route): step 1/1. In terms of biological role, involved in the de novo purine biosynthesis. Catalyzes the transfer of formate to 5-phospho-ribosyl-glycinamide (GAR), producing 5-phospho-ribosyl-N-formylglycinamide (FGAR). Formate is provided by PurU via hydrolysis of 10-formyl-tetrahydrofolate. This Mycolicibacterium gilvum (strain PYR-GCK) (Mycobacterium gilvum (strain PYR-GCK)) protein is Formate-dependent phosphoribosylglycinamide formyltransferase.